Consider the following 247-residue polypeptide: Uridylate kinase (247 aa).

An ATP-binding site is contributed by K11–G14. Positions G19–G24 are involved in allosteric activation by GTP. G53 contacts UMP. ATP is bound by residues G54 and R58. UMP is bound by residues D73 and T134–T141. Residues T161, Q162, Y167, and D170 each coordinate ATP.

This sequence belongs to the UMP kinase family. As to quaternary structure, homohexamer.

It localises to the cytoplasm. The catalysed reaction is UMP + ATP = UDP + ADP. It participates in pyrimidine metabolism; CTP biosynthesis via de novo pathway; UDP from UMP (UMPK route): step 1/1. With respect to regulation, allosterically activated by GTP. Inhibited by UTP. Catalyzes the reversible phosphorylation of UMP to UDP. The chain is Uridylate kinase from Chelativorans sp. (strain BNC1).